The primary structure comprises 376 residues: Erythronate-4-phosphate dehydrogenase (376 aa).

Substrate contacts are provided by S45 and T67. D147 contacts NAD(+). The active site involves R209. D233 serves as a coordination point for NAD(+). The active site involves E238. H255 serves as the catalytic Proton donor. Position 258 (G258) interacts with NAD(+). Y259 contributes to the substrate binding site.

This sequence belongs to the D-isomer specific 2-hydroxyacid dehydrogenase family. PdxB subfamily. In terms of assembly, homodimer.

It is found in the cytoplasm. The catalysed reaction is 4-phospho-D-erythronate + NAD(+) = (R)-3-hydroxy-2-oxo-4-phosphooxybutanoate + NADH + H(+). Its pathway is cofactor biosynthesis; pyridoxine 5'-phosphate biosynthesis; pyridoxine 5'-phosphate from D-erythrose 4-phosphate: step 2/5. Catalyzes the oxidation of erythronate-4-phosphate to 3-hydroxy-2-oxo-4-phosphonooxybutanoate. The protein is Erythronate-4-phosphate dehydrogenase of Shewanella oneidensis (strain ATCC 700550 / JCM 31522 / CIP 106686 / LMG 19005 / NCIMB 14063 / MR-1).